The primary structure comprises 1526 residues: DNA topoisomerase 2-alpha (1526 aa).

Met1 carries the N-acetylmethionine modification. Positions 1-21 are disordered; the sequence is MELSPLQPVNENMQMNKKKNE. Ser4 is modified (phosphoserine). Residue Lys17 forms a Glycyl lysine isopeptide (Lys-Gly) (interchain with G-Cter in SUMO2) linkage. ATP-binding positions include Asn90, Asn119, and 147 to 149; that span reads SSN. Residues Lys155 and Lys156 each participate in a glycyl lysine isopeptide (Lys-Gly) (interchain with G-Cter in SUMO2) cross-link. 160-167 lines the ATP pocket; the sequence is GRNGYGAK. A Glycyl lysine isopeptide (Lys-Gly) (interchain with G-Cter in SUMO2) cross-link involves residue Lys260. Thr281 bears the Phosphothreonine mark. Positions 341–343 are interaction with DNA; it reads KKK. Residue Lys351 forms a Glycyl lysine isopeptide (Lys-Gly) (interchain with G-Cter in SUMO2) linkage. 375 to 377 lines the ATP pocket; sequence QTK. Residues Lys385, Lys396, Lys415, Lys417, Lys424, and Lys439 each participate in a glycyl lysine isopeptide (Lys-Gly) (interchain with G-Cter in SUMO2) cross-link. The 118-residue stretch at 454–571 folds into the Toprim domain; that stretch reads CTLILTEGDS…SLLRHRFLEE (118 aa). Position 460 (Glu460) interacts with Mg(2+). Residues Lys465, Lys479, and Lys528 each participate in a glycyl lysine isopeptide (Lys-Gly) (interchain with G-Cter in SUMO2) cross-link. The Mg(2+) site is built by Asp540 and Asp542. Glycyl lysine isopeptide (Lys-Gly) (interchain with G-Cter in SUMO2) cross-links involve residues Lys583, Lys598, Lys613, Lys621, Lys624, Lys631, Lys638, Lys654, Lys661, and Lys675. Residues 714-1166 enclose the Topo IIA-type catalytic domain; it reads IPSMVDGLKP…SPSDLWKEDL (453 aa). Tyr804 (O-(5'-phospho-DNA)-tyrosine intermediate) is an active-site residue. Positions 989-998 are interaction with DNA; the sequence is KLQTSLTCNS. Residue Lys1074 forms a Glycyl lysine isopeptide (Lys-Gly) (interchain with G-Cter in SUMO2) linkage. Disordered regions lie at residues 1089–1117 and 1180–1217; these read WKEAQQKVPDEEENEESDNENSDSVAESG and EKQDEQVGLPGKGGKAKGKKAQMSEVLPSPHGKRVIPQ. Acidic residues predominate over residues 1098-1109; the sequence is DEEENEESDNEN. A Phosphoserine; by CK1 modification is found at Ser1105. Glycyl lysine isopeptide (Lys-Gly) (interchain with G-Cter in SUMO2) cross-links involve residues Lys1191 and Lys1199. Phosphoserine is present on Ser1208. Residue Lys1223 forms a Glycyl lysine isopeptide (Lys-Gly) (interchain with G-Cter in SUMO2) linkage. Residues 1233 to 1526 form a disordered region; it reads KIKSENVEGT…LEESDDDDLF (294 aa). Lys1235 is covalently cross-linked (Glycyl lysine isopeptide (Lys-Gly) (interchain with G-Cter in SUMO1); alternate). Lys1235 participates in a covalent cross-link: Glycyl lysine isopeptide (Lys-Gly) (interchain with G-Cter in SUMO2); alternate. Position 1242 is a phosphothreonine (Thr1242). A Glycyl lysine isopeptide (Lys-Gly) (interchain with G-Cter in SUMO2) cross-link involves residue Lys1254. Basic and acidic residues predominate over residues 1255–1265; the sequence is QRIEKKQKKEP. Glycyl lysine isopeptide (Lys-Gly) (interchain with G-Cter in SUMO2) cross-links involve residues Lys1271, Lys1278, and Lys1281. Phosphoserine is present on residues Ser1290, Ser1292, Ser1294, and Ser1297. At Thr1322 the chain carries Phosphothreonine. Positions 1325-1344 are enriched in acidic residues; it reads LDSDEDFSGSDGKDEDEDFF. A phosphoserine mark is found at Ser1327 and Ser1332. Phosphothreonine is present on Thr1349. Glycyl lysine isopeptide (Lys-Gly) (interchain with G-Cter in SUMO2) cross-links involve residues Lys1358, Lys1362, and Lys1368. 2 positions are modified to phosphoserine: Ser1369 and Ser1372. Lys1380 is covalently cross-linked (Glycyl lysine isopeptide (Lys-Gly) (interchain with G-Cter in SUMO2)). Phosphoserine occurs at positions 1382 and 1386. Residues 1405–1426 are compositionally biased toward low complexity; it reads SKQTVAVKKTATKSQSSTSTAG. A Glycyl lysine isopeptide (Lys-Gly) (interchain with G-Cter in SUMO2); alternate cross-link involves residue Lys1417. Position 1417 is an N6-acetyllysine; alternate (Lys1417). Positions 1428 to 1434 are interaction with PLSCR1; that stretch reads KKRAVPK. Lys1437 is covalently cross-linked (Glycyl lysine isopeptide (Lys-Gly) (interchain with G-Cter in SUMO2); alternate). An N6-acetyllysine; alternate modification is found at Lys1437. Glycyl lysine isopeptide (Lys-Gly) (interchain with G-Cter in SUMO2) cross-links involve residues Lys1449 and Lys1454. Residues Ser1464, Ser1466, Ser1469, and Ser1471 each carry the phosphoserine modification. Glycyl lysine isopeptide (Lys-Gly) (interchain with G-Cter in SUMO2) cross-links involve residues Lys1479 and Lys1487. A compositionally biased stretch (basic and acidic residues) spans 1486–1497; it reads SKGENQDFRVDL. Residue Ser1520 is modified to Phosphoserine.

The protein belongs to the type II topoisomerase family. As to quaternary structure, homodimer. Interacts with COPS5. Interacts with RECQL5; this stimulates DNA decatenation. Interacts with SETMAR; stimulates the topoisomerase activity. Interacts with DHX9; this interaction occurs in a E2 enzyme UBE2I- and RNA-dependent manner, negatively regulates DHX9-mediated double-stranded DNA and RNA duplex helicase activity and stimulates TOP2A-mediated supercoiled DNA relaxation activity. Interacts with HNRNPU (via C-terminus); this interaction protects the topoisomerase TOP2A from degradation and positively regulates the relaxation of supercoiled DNA in a RNA-dependent manner. Interacts with MCM3AP. Interacts with ERCC6. Interacts with PLSCR1. Interacts with GCNA; this interaction allows the resolution of topoisomerase II (TOP2A) DNA-protein cross-links. Interacts with POL1RA/RPA1 (via dock II) and UBTF in the context of Pol I complex; may assist Pol I transcription initiation by releasing supercoils occurring during DNA unwinding. Interacts with TPRN; TPRN interacts with a number of DNA damage response proteins, is recruited to sites of DNA damage and may play a role in DNA damage repair. The cofactor is Mg(2+). Requires Mn(2+) as cofactor. Ca(2+) serves as cofactor. Post-translationally, phosphorylation has no effect on catalytic activity. However, phosphorylation at Ser-1105 by CSNK1D/CK1 promotes DNA cleavable complex formation.

Its subcellular location is the cytoplasm. It localises to the nucleus. The protein resides in the nucleoplasm. The protein localises to the nucleolus. The catalysed reaction is ATP-dependent breakage, passage and rejoining of double-stranded DNA.. Functionally, key decatenating enzyme that alters DNA topology by binding to two double-stranded DNA molecules, generating a double-stranded break in one of the strands, passing the intact strand through the broken strand, and religating the broken strand. May play a role in regulating the period length of BMAL1 transcriptional oscillation. The polypeptide is DNA topoisomerase 2-alpha (TOP2A) (Cricetulus griseus (Chinese hamster)).